The primary structure comprises 731 residues: Radial spoke head 10 homolog B (731 aa).

The tract at residues 1–69 (MARGDNMKSS…PNENQPIGEH (69 aa)) is disordered. Residues 7 to 17 (MKSSNKSTPEP) show a composition bias toward polar residues. Composition is skewed to low complexity over residues 18–36 (TLSKTLVESSTSSLLSESV) and 46–57 (SSSAVCSASTVS). MORN repeat units lie at residues 86–108 (YEGEKCGEMFHGEGVAYFQGGHV), 109–131 (YKGSFSHGLMHGYGEYIWSDGLK), 132–154 (YQGDFKVNVPMGHGTYTWLNGST), 155–177 (YEGEVHQGIRHGVGMYKCVKTLT), 179–201 (YRGQWYLGKRQGQGEMFYNQEAT), 204–226 (YKGEWVNNCREGWGKRCYPSGNV), 227–249 (YEGQWRNNVRHGEGTMRWIDLDQ), 251–273 (YSGQWINGIQEGKGTHTWFRKRA), 284–306 (YTGDFVQAMRHGQGQFLYASGAL), and 307–329 (YCGQWKYDKKHGQGRYIFENGRV). 2 disordered regions span residues 353-377 (TTPFPDENDSSKGASQSSSNASPLG) and 709-731 (KQEQDADGNELCPVTTTSVTSIH). Residues 363–377 (SKGASQSSSNASPLG) are compositionally biased toward low complexity. A compositionally biased stretch (polar residues) spans 722–731 (VTTTSVTSIH).

It is found in the cytoplasm. Its subcellular location is the cytoskeleton. The protein localises to the cilium axoneme. It localises to the cell projection. The protein resides in the cilium. It is found in the flagellum. In terms of biological role, may function as part of axonemal radial spoke complexes. Radial spoke complexes are important for ciliary motility. This is Radial spoke head 10 homolog B (rsph10b) from Danio rerio (Zebrafish).